A 230-amino-acid chain; its full sequence is 5'-methylthioadenosine/S-adenosylhomocysteine nucleosidase (230 aa).

Residue E12 is the Proton acceptor of the active site. Residues G78, I152, and 173 to 174 contribute to the substrate site; that span reads ME. Catalysis depends on D197, which acts as the Proton donor.

Belongs to the PNP/UDP phosphorylase family. MtnN subfamily.

It catalyses the reaction S-adenosyl-L-homocysteine + H2O = S-(5-deoxy-D-ribos-5-yl)-L-homocysteine + adenine. The enzyme catalyses S-methyl-5'-thioadenosine + H2O = 5-(methylsulfanyl)-D-ribose + adenine. It carries out the reaction 5'-deoxyadenosine + H2O = 5-deoxy-D-ribose + adenine. It participates in amino-acid biosynthesis; L-methionine biosynthesis via salvage pathway; S-methyl-5-thio-alpha-D-ribose 1-phosphate from S-methyl-5'-thioadenosine (hydrolase route): step 1/2. Functionally, catalyzes the irreversible cleavage of the glycosidic bond in both 5'-methylthioadenosine (MTA) and S-adenosylhomocysteine (SAH/AdoHcy) to adenine and the corresponding thioribose, 5'-methylthioribose and S-ribosylhomocysteine, respectively. Also cleaves 5'-deoxyadenosine, a toxic by-product of radical S-adenosylmethionine (SAM) enzymes, into 5-deoxyribose and adenine. This chain is 5'-methylthioadenosine/S-adenosylhomocysteine nucleosidase, found in Actinobacillus succinogenes (strain ATCC 55618 / DSM 22257 / CCUG 43843 / 130Z).